Here is a 166-residue protein sequence, read N- to C-terminus: Ribosome maturation factor RimP (166 aa).

This sequence belongs to the RimP family.

The protein resides in the cytoplasm. In terms of biological role, required for maturation of 30S ribosomal subunits. The protein is Ribosome maturation factor RimP of Paramagnetospirillum magneticum (strain ATCC 700264 / AMB-1) (Magnetospirillum magneticum).